The following is a 325-amino-acid chain: MPTIDFTFCEINPKKGFGGANGNKISLFYNNELYMVKFPPKPSTHKEMSYTNGCFSEYVACHIVNSLGLKVQETLLGTYKNKIVVACKDFTTHQYELVDFLSLKNTMIELEKSGKDTNLNDVLYAIDNQHFIEPKVLKCFFWDMFVADTLLGNFDRHNGNWGFLRASNSKEYQIAPIFDCGSCLYPQADDVVCQKVLSNIDELNARIYNFPQSILKDDNDKKINYYDFLTQTNNKDCLDALLRIYPRIDMNKIHSIIDNTPFMSEIHKEFLHTMLDERKSKIIDVAHTRAIELSLQHKQAHSNPYDNADDLDNSNEYTPTPKRRR.

Residues 21-24 (NGNK), Lys37, Gln72, and 88-90 (KDF) contribute to the ATP site. Residues Asn160 and Asp179 each coordinate Mg(2+). Residue Asp179 participates in ATP binding. Residues 296-325 (QHKQAHSNPYDNADDLDNSNEYTPTPKRRR) form a disordered region.

Post-translationally, autophosphorylates on either Thr-3 or Thr-7.

The protein localises to the secreted. The protein resides in the host cytoplasm. It is found in the host cytosol. It localises to the host nucleus. The enzyme catalyses L-seryl-[protein] + ATP = O-phospho-L-seryl-[protein] + ADP + H(+). It catalyses the reaction L-threonyl-[protein] + ATP = O-phospho-L-threonyl-[protein] + ADP + H(+). Functionally, virulence factor acting as a pro-inflammatory protein that induces the secretion of the pro-inflammatory cytokines TNF-alpha (tumor necrosis factor-alpha) and IL-8 (interleukin-8) from human macrophages, as well as enhanced translocation of the transcription factor NF-kappa-B complex in macrophages. Is a kinase capable of autophosphorylating itself at a threonine residue near the N-terminus. Also leads to enhanced phosphorylation of the NF-kappa-B p65 subunit (RELA) at 'Ser-276' in human epithelial cancer cells; its kinase activity is required for this enhanced phosphorylation that up-regulates NF-kappa-B activity, but it does not directly phosphorylate this protein. Thus, the kinase activity of CtkA may play an important role in the induction of host inflammatory responses during H.pylori infection. This Helicobacter pylori (strain J99 / ATCC 700824) (Campylobacter pylori J99) protein is Serine/threonine-protein kinase CtkA (ctkA).